Consider the following 129-residue polypeptide: Aspartate 1-decarboxylase (129 aa).

Ser25 functions as the Schiff-base intermediate with substrate; via pyruvic acid in the catalytic mechanism. Pyruvic acid (Ser) is present on Ser25. Thr57 lines the substrate pocket. The Proton donor role is filled by Tyr58. Position 73-75 (73-75 (GAA)) interacts with substrate.

Belongs to the PanD family. In terms of assembly, heterooctamer of four alpha and four beta subunits. The cofactor is pyruvate. Is synthesized initially as an inactive proenzyme, which is activated by self-cleavage at a specific serine bond to produce a beta-subunit with a hydroxyl group at its C-terminus and an alpha-subunit with a pyruvoyl group at its N-terminus.

Its subcellular location is the cytoplasm. It carries out the reaction L-aspartate + H(+) = beta-alanine + CO2. Its pathway is cofactor biosynthesis; (R)-pantothenate biosynthesis; beta-alanine from L-aspartate: step 1/1. In terms of biological role, catalyzes the pyruvoyl-dependent decarboxylation of aspartate to produce beta-alanine. The polypeptide is Aspartate 1-decarboxylase (Chlorobium chlorochromatii (strain CaD3)).